Here is an 84-residue protein sequence, read N- to C-terminus: ATP synthase subunit c (84 aa).

A run of 2 helical transmembrane segments spans residues 9 to 29 and 54 to 74; these read IFGS…GFSL and IVAG…LLFI.

The protein belongs to the ATPase C chain family. F-type ATPases have 2 components, F(1) - the catalytic core - and F(0) - the membrane proton channel. F(1) has five subunits: alpha(3), beta(3), gamma(1), delta(1), epsilon(1). F(0) has three main subunits: a(1), b(2) and c(10-14). The alpha and beta chains form an alternating ring which encloses part of the gamma chain. F(1) is attached to F(0) by a central stalk formed by the gamma and epsilon chains, while a peripheral stalk is formed by the delta and b chains.

The protein localises to the cell inner membrane. Its function is as follows. F(1)F(0) ATP synthase produces ATP from ADP in the presence of a proton or sodium gradient. F-type ATPases consist of two structural domains, F(1) containing the extramembraneous catalytic core and F(0) containing the membrane proton channel, linked together by a central stalk and a peripheral stalk. During catalysis, ATP synthesis in the catalytic domain of F(1) is coupled via a rotary mechanism of the central stalk subunits to proton translocation. Functionally, key component of the F(0) channel; it plays a direct role in translocation across the membrane. A homomeric c-ring of between 10-14 subunits forms the central stalk rotor element with the F(1) delta and epsilon subunits. This Histophilus somni (strain 129Pt) (Haemophilus somnus) protein is ATP synthase subunit c.